Reading from the N-terminus, the 392-residue chain is Branched-chain-amino-acid aminotransferase, mitochondrial (392 aa).

A mitochondrion-targeting transit peptide spans 1 to 27 (MAAAALGQIWARKLLSVPWLLCGPRRY). Y168 contacts substrate. An N6-(pyridoxal phosphate)lysine modification is found at K229. K321 carries the post-translational modification N6-acetyllysine.

This sequence belongs to the class-IV pyridoxal-phosphate-dependent aminotransferase family. Homodimer. Pyridoxal 5'-phosphate serves as cofactor. As to expression, ubiquitous.

The protein localises to the mitochondrion. The enzyme catalyses L-leucine + 2-oxoglutarate = 4-methyl-2-oxopentanoate + L-glutamate. It carries out the reaction L-isoleucine + 2-oxoglutarate = (S)-3-methyl-2-oxopentanoate + L-glutamate. It catalyses the reaction L-valine + 2-oxoglutarate = 3-methyl-2-oxobutanoate + L-glutamate. Its function is as follows. Catalyzes the first reaction in the catabolism of the essential branched chain amino acids leucine, isoleucine, and valine. May also function as a transporter of branched chain alpha-keto acids. This Homo sapiens (Human) protein is Branched-chain-amino-acid aminotransferase, mitochondrial (BCAT2).